We begin with the raw amino-acid sequence, 229 residues long: Uracil-DNA glycosylase (229 aa).

Aspartate 64 acts as the Proton acceptor in catalysis.

The protein belongs to the uracil-DNA glycosylase (UDG) superfamily. UNG family.

It localises to the cytoplasm. It carries out the reaction Hydrolyzes single-stranded DNA or mismatched double-stranded DNA and polynucleotides, releasing free uracil.. In terms of biological role, excises uracil residues from the DNA which can arise as a result of misincorporation of dUMP residues by DNA polymerase or due to deamination of cytosine. This chain is Uracil-DNA glycosylase, found in Salmonella choleraesuis (strain SC-B67).